The following is a 272-amino-acid chain: Phosphatidylglycerol--prolipoprotein diacylglyceryl transferase (272 aa).

The next 7 helical transmembrane spans lie at 17-37, 55-75, 90-110, 125-145, 174-194, 202-222, and 230-250; these read LQVH…WGLA, LVFY…VLFY, VWTG…AMLF, FIAP…FIGG, PSQI…LWWF, MAVS…MEFF, and GFIL…MLLI. Arg138 contacts a 1,2-diacyl-sn-glycero-3-phospho-(1'-sn-glycerol).

Belongs to the Lgt family.

The protein resides in the cell inner membrane. It catalyses the reaction L-cysteinyl-[prolipoprotein] + a 1,2-diacyl-sn-glycero-3-phospho-(1'-sn-glycerol) = an S-1,2-diacyl-sn-glyceryl-L-cysteinyl-[prolipoprotein] + sn-glycerol 1-phosphate + H(+). It functions in the pathway protein modification; lipoprotein biosynthesis (diacylglyceryl transfer). Catalyzes the transfer of the diacylglyceryl group from phosphatidylglycerol to the sulfhydryl group of the N-terminal cysteine of a prolipoprotein, the first step in the formation of mature lipoproteins. This is Phosphatidylglycerol--prolipoprotein diacylglyceryl transferase from Acinetobacter baumannii (strain SDF).